Here is a 60-residue protein sequence, read N- to C-terminus: Putative potassium channel blocker TXKS1 (60 aa).

Positions methionine 1–alanine 28 are cleaved as a signal peptide. 3 disulfide bridges follow: cysteine 32-cysteine 49, cysteine 35-cysteine 55, and cysteine 39-cysteine 57. Residue lysine 59 is modified to Lysine amide.

Expressed by the venom gland.

It localises to the secreted. Inhibits potassium channels. The protein is Putative potassium channel blocker TXKS1 of Olivierus martensii (Manchurian scorpion).